Consider the following 196-residue polypeptide: CRISPR-associated exonuclease Cas4 (196 aa).

Cys-23 contacts [4Fe-4S] cluster. Positions 50, 90, and 103 each coordinate Mn(2+). 3 residues coordinate [4Fe-4S] cluster: Cys-184, Cys-187, and Cys-193.

Belongs to the CRISPR-associated exonuclease Cas4 family. Mg(2+) serves as cofactor. The cofactor is [4Fe-4S] cluster.

The catalysed reaction is exonucleolytic cleavage in the 5'- to 3'-direction to yield nucleoside 3'-phosphates.. Functionally, CRISPR (clustered regularly interspaced short palindromic repeat) is an adaptive immune system that provides protection against mobile genetic elements (viruses, transposable elements and conjugative plasmids). CRISPR clusters contain sequences complementary to antecedent mobile elements and target invading nucleic acids. CRISPR clusters are transcribed and processed into CRISPR RNA (crRNA). This may be a 5' to 3' ssDNA exonuclease. This is CRISPR-associated exonuclease Cas4 from Francisella tularensis subsp. novicida (strain U112).